The chain runs to 131 residues: Large ribosomal subunit protein bL19 (131 aa).

Residues 1-11 (MEETMNNQEAP) show a composition bias toward polar residues. Residues 1 to 20 (MEETMNNQEAPETSEEETVA) are disordered.

It belongs to the bacterial ribosomal protein bL19 family.

In terms of biological role, this protein is located at the 30S-50S ribosomal subunit interface and may play a role in the structure and function of the aminoacyl-tRNA binding site. In Dehalococcoides mccartyi (strain ATCC BAA-2100 / JCM 16839 / KCTC 5957 / BAV1), this protein is Large ribosomal subunit protein bL19.